We begin with the raw amino-acid sequence, 864 residues long: Microtubule-associated protein TORTIFOLIA1 (864 aa).

The interval methionine 1–serine 26 is disordered. A compositionally biased stretch (polar residues) spans alanine 17–serine 26. HEAT repeat units lie at residues glutamate 76–aspartate 113, alanine 117–lysine 154, leucine 167–serine 204, threonine 208–isoleucine 245, and glutamine 248–glycine 285. A disordered region spans residues aspartate 329 to serine 353. Serine 414 bears the Phosphoserine mark. The tract at residues asparagine 426–arginine 504 is disordered. A compositionally biased stretch (polar residues) spans methionine 439–threonine 448. Residues glutamine 449–phenylalanine 459 show a composition bias toward basic and acidic residues. Over residues valine 489 to arginine 504 the composition is skewed to polar residues. Residues serine 508–serine 561 are a coiled coil. Positions aspartate 615–arginine 670 are disordered. The span at proline 636 to aspartate 654 shows a compositional bias: basic and acidic residues.

In terms of assembly, interacts with WAV3. Expressed in roots, hypocotyls, stems, flowers, siliques, inflorescences, petioles, cotyledons, and leaves. Particularly present in root tips and shoot meristems.

Its subcellular location is the cytoplasm. The protein localises to the cytoskeleton. Functionally, plant-specific microtubule-associated protein (MAP) that regulates the orientation of cortical microtubules and the direction of organ growth. Determines microtubule organization by modulating microtubule severing. The protein is Microtubule-associated protein TORTIFOLIA1 of Arabidopsis thaliana (Mouse-ear cress).